The chain runs to 362 residues: Cytochrome c oxidase subunit 2 (362 aa).

The signal sequence occupies residues 1-28 (MEQQEKRGTVRKALLGSVIGFGGLALAG). Cys29 carries the N-palmitoyl cysteine lipid modification. Cys29 is lipidated: S-diacylglycerol cysteine. 2 consecutive transmembrane segments (helical) span residues 60-80 (FWVW…GLFI) and 107-127 (IPLE…LFFF). The segment at 171–206 (SDYVGTDEKRQEAAEKTKFDQGGDNPNPINGRSKTD) is disordered. Basic and acidic residues predominate over residues 176 to 191 (TDEKRQEAAEKTKFDQ). The segment covering 197–206 (NPINGRSKTD) has biased composition (polar residues). Cu cation is bound by residues His246, Cys287, Glu289, Cys291, His295, and Met298. A disordered region spans residues 325–362 (NSDALKSIGEAPYATSTHPFNSERATRDGANFDDTAAA).

The protein belongs to the cytochrome c oxidase subunit 2 family. As to quaternary structure, associates with subunits I, III and IV to form cytochrome c oxidase. The cofactor is binuclear copper center (CuA).

The protein resides in the cell membrane. It catalyses the reaction 4 Fe(II)-[cytochrome c] + O2 + 8 H(+)(in) = 4 Fe(III)-[cytochrome c] + 2 H2O + 4 H(+)(out). Subunits I and II form the functional core of the enzyme complex. Electrons originating in cytochrome c are transferred via heme a and Cu(A) to the binuclear center formed by heme a3 and Cu(B). This Corynebacterium diphtheriae (strain ATCC 700971 / NCTC 13129 / Biotype gravis) protein is Cytochrome c oxidase subunit 2 (ctaC).